The following is a 283-amino-acid chain: Polyamine aminopropyltransferase (283 aa).

Residues 5–238 form the PABS domain; the sequence is PTWIDEYHKG…GIWSWTFASD (234 aa). Position 32 (Gln-32) interacts with S-methyl-5'-thioadenosine. Residues His-63 and Asp-87 each coordinate spermidine. S-methyl-5'-thioadenosine-binding positions include Glu-107 and 139–140; that span reads DG. Asp-158 (proton acceptor) is an active-site residue. 158 to 161 contacts spermidine; that stretch reads DCSD.

The protein belongs to the spermidine/spermine synthase family. In terms of assembly, homodimer or homotetramer.

Its subcellular location is the cytoplasm. The catalysed reaction is S-adenosyl 3-(methylsulfanyl)propylamine + putrescine = S-methyl-5'-thioadenosine + spermidine + H(+). Its pathway is amine and polyamine biosynthesis; spermidine biosynthesis; spermidine from putrescine: step 1/1. Its function is as follows. Catalyzes the irreversible transfer of a propylamine group from the amino donor S-adenosylmethioninamine (decarboxy-AdoMet) to putrescine (1,4-diaminobutane) to yield spermidine. The protein is Polyamine aminopropyltransferase of Prochlorococcus marinus subsp. pastoris (strain CCMP1986 / NIES-2087 / MED4).